The following is a 384-amino-acid chain: Aryl-alcohol dehydrogenase GME11368 (384 aa).

An NADP(+)-binding site is contributed by aspartate 69. The active-site Proton donor is tyrosine 74. NADP(+)-binding positions include 177–178 (SD), glutamine 203, and 301–309 (RKPEHLKAN).

This sequence belongs to the aldo/keto reductase family. Aldo/keto reductase 2 subfamily.

Its pathway is secondary metabolite biosynthesis. Functionally, aryl-alcohol dehydrogenase; part of the gene cluster that mediates the biosynthesis of dibenzodioxocinones such as pestalotiollide B, a novel class of inhibitors against cholesterol ester transfer protein (CEPT). The biosynthesis initiates from condensation of acetate and malonate units catalyzed by the non-reducing PKS pks8/GME11356. Pks8/GME11356 lacks a thioesterase (TE) domain, which is important to the cyclizing of the third ring of atrochrysone carboxylic acid, and the esterase GME11355 might play the role of TE and catalyzes the cyclization reaction of the C ring. The lactamase-like protein GME11357 (or other beta-lactamases in Pestalotiopsis microspora) probably hydrolyzes the thioester bond between the ACP of pks8/GME11356 and the intermediate to release atrochrysone carboxylic acid, which is spontaneously dehydrates to form endocrocin anthrone. Endocrocin anthrone is further converted to emodin via the endocrocin intermediate. Emodin is then oxidized by several enzymes such as the Baeyer-Villiger oxidase GME11358, the oxidoreductase GME11367, the short chain dehydrogenase/reductase GME11373, as well as by other oxidoreductases from the cluster, to modify the A and C rings and open the B ring, and finally yield monodictyphenone. The prenyltransferase GME11375 may catalyze the addition reaction between the C5 side chains and the carbon bone of dibenzodioxocinones. The remaining biochemical reactions to the final product dibenzodioxocinones should be methylation catalyzed by methyltransferase GME11366 and reduction and lactonization reaction catalyzed by a series of oxidordeuctases. This is Aryl-alcohol dehydrogenase GME11368 from Pestalotiopsis microspora.